The sequence spans 569 residues: Peptide transporter PTR_C (569 aa).

Over residues 1 to 25 (MSQNVDEKVVHDDASVIRSVDRSES) the composition is skewed to basic and acidic residues. A disordered region spans residues 1-43 (MSQNVDEKVVHDDASVIRSVDRSESDSYPDSVSPEGAEPSEEE). Residues 54 to 74 (VPLACWLVAIVELAERFSYYG) form a helical membrane-spanning segment. A glycan (N-linked (GlcNAc...) asparagine) is linked at asparagine 98. 3 helical membrane passes run 104–124 (ALSY…AWVA), 134–154 (ISIF…TSLP), and 159–179 (NTSL…TGGV). An N-linked (GlcNAc...) asparagine glycan is attached at asparagine 212. The next 8 membrane-spanning stretches (helical) occupy residues 215 to 235 (IQNV…SVIA), 245 to 265 (FWAA…ALFL), 322 to 342 (ALYA…YGQM), 366 to 386 (IDSI…YPFI), 398 to 418 (IFWG…LQHF), 444 to 464 (VALQ…ASIT), 479 to 499 (SFIM…GIAL), and 510 to 530 (WTYT…WFLF).

This sequence belongs to the major facilitator superfamily. Proton-dependent oligopeptide transporter (POT/PTR) (TC 2.A.17) family.

Its subcellular location is the cell membrane. The enzyme catalyses a dipeptide(out) + H(+)(out) = a dipeptide(in) + H(+)(in). The catalysed reaction is an L-amino acid tripeptide(out) + H(+)(out) = an L-amino acid tripeptide(in) + H(+)(in). Peptide transporter that exploits the inwardly directed proton motive force to facilitate the cellular uptake of di/tripeptides. Shows strong uptake specificity towards the dipeptides Tyr-Phe and Leu-Gly and the tripeptide Phe-Gly-Gly, when compared to PTR_A and PTR_B. Also able to import peptide-based antifungals such as the peptide-nucleoside drug nikkomycin Z as well as the glucosamine-6-phosphate synthase inhibitor, L-norvalyl-N3-(4-methoxyfumaroyl)-L-2,3-diaminopropionoic acid (Nva-FMDP). This is Peptide transporter PTR_C from Candidozyma auris (Yeast).